Reading from the N-terminus, the 543-residue chain is ADP,ATP carrier protein 3 (543 aa).

The next 10 membrane-spanning stretches (helical) occupy residues 46-66 (VLYL…MGNL), 86-106 (IFLP…LSLF), 111-131 (MFDI…LVVW), 175-195 (FLFL…FNIF), 209-229 (ISVY…LTLV), 243-263 (ELGF…ILAL), 306-326 (LLIA…LVEA), 346-366 (FANF…LVVI), 382-402 (LASL…LIAF), and 504-524 (SVSG…LKYL).

The protein belongs to the ADP/ATP translocase tlc family.

The protein resides in the mitosome membrane. ATP transporter involved in the uptake of ATP from the parasite cell cytoplasm into the mitosome matrix. Equilibrates nucleotide pools across a concentration gradient between both sides of the mitosome membrane. This chain is ADP,ATP carrier protein 3 (NTT3), found in Encephalitozoon cuniculi (strain GB-M1) (Microsporidian parasite).